A 298-amino-acid polypeptide reads, in one-letter code: Probable GTP 3',8-cyclase (298 aa).

Positions 4 to 227 (RYGREIRSFR…MQNRKKYLID (224 aa)) constitute a Radical SAM core domain. Arginine 13 contacts GTP. [4Fe-4S] cluster-binding residues include cysteine 20 and cysteine 24. Tyrosine 26 serves as a coordination point for S-adenosyl-L-methionine. Cysteine 27 contributes to the [4Fe-4S] cluster binding site. Residue lysine 61 participates in GTP binding. Glycine 65 is an S-adenosyl-L-methionine binding site. Threonine 91 is a binding site for GTP. Serine 115 is an S-adenosyl-L-methionine binding site. Lysine 152 contacts GTP. [4Fe-4S] cluster-binding residues include cysteine 243 and cysteine 246. A GTP-binding site is contributed by 248-250 (RIR). Cysteine 260 is a binding site for [4Fe-4S] cluster.

This sequence belongs to the radical SAM superfamily. MoaA family. [4Fe-4S] cluster serves as cofactor.

It carries out the reaction GTP + AH2 + S-adenosyl-L-methionine = (8S)-3',8-cyclo-7,8-dihydroguanosine 5'-triphosphate + 5'-deoxyadenosine + L-methionine + A + H(+). Its pathway is cofactor biosynthesis; molybdopterin biosynthesis. In terms of biological role, catalyzes the cyclization of GTP to (8S)-3',8-cyclo-7,8-dihydroguanosine 5'-triphosphate. The sequence is that of Probable GTP 3',8-cyclase from Methanococcus maripaludis (strain C5 / ATCC BAA-1333).